The sequence spans 773 residues: MGDEDEDEGCAVELQITEANLTGHEEKVSVENFALLKVLGTGAYGKVFLVRKTGGHDAGKLYAMKVLRKAALVQRAKTQEHTRTERSVLELVRQAPFLVTLHYAFQTDAKLHLILDYVSGGEMFTHLYQRQYFKEAEVRVYGGEIVLALEHLHKLGIIYRDLKLENVLLDSEGHIVLTDFGLSKEFLTEEKERTFSFCGTIEYMAPEIIRSKAGHGKAVDWWSLGILLFELLTGASPFTLEGERNTQAEVSRRILKCSPPFPLRIGPVAQDLLQRLLCKDPKKRLGAGPQGAQEVKSHPFFQGLDWVALAARKIPAPFRPQIRSELDVGNFAEEFTRLEPVYSPAGSPPPGDPRIFQGYSFVAPSILFDHNNAVMADVLQAPGAGYRPGRAAVARSAMMQDSPFFQQYELDLREPALGQGSFSVCRRCRQRQSGQEFAVKILSRRLEENTQREVAALRLCQSHPNVVNLHEVLHDQLHTYLVLELLRGGELLEHIRKKRLFSESEASQILRSLVSAVSFMHEEAGVVHRDLKPENILYADDTPGAPVKIIDFGFARLRPQSPAEPMQTPCFTLQYAAPELLAQQGYDESCDLWSLGVILYMMLSGQVPFQGASGQGGQSQAAEIMCKIREGRFSLDGEAWQGVSEEAKELVRGLLTVDPAKRLKLEGLRSSSWLQDGSARSSPPLRTPDVLESSGPAVRSGLNATFMAFNRGKREGFFLKSVENAPLAKRRKQKLRSAAASRRGSPVPASSGRLPASAAKGTTRRANGPLSPS.

Residues 33-301 enclose the Protein kinase 1 domain; that stretch reads FALLKVLGTG…AQEVKSHPFF (269 aa). ATP is bound by residues 39–47 and Lys65; that span reads LGTGAYGKV. Asp161 acts as the Proton acceptor in catalysis. The residue at position 196 (Ser196) is a Phosphoserine; by autocatalysis. The 70-residue stretch at 302 to 371 folds into the AGC-kinase C-terminal domain; the sequence is QGLDWVALAA…VAPSILFDHN (70 aa). Ser343 is subject to Phosphoserine; by MAPK1, MAPK3 and MAPK14. Ser347 carries the post-translational modification Phosphoserine. Ser360 and Ser365 each carry phosphoserine; by autocatalysis. Residues 417–425 and Lys440 contribute to the ATP site; that span reads LGQGSFSVC. In terms of domain architecture, Protein kinase 2 spans 417-674; the sequence is LGQGSFSVCR…LEGLRSSSWL (258 aa). The active-site Proton acceptor is Asp530. Thr542 carries the phosphothreonine modification. At Thr568 the chain carries Phosphothreonine; by MAPK1, MAPK3 and MAPK14. 2 positions are modified to phosphoserine: Ser634 and Ser678. Disordered stretches follow at residues 674 to 696 and 728 to 773; these read LQDGSARSSPPLRTPDVLESSGP and AKRR…LSPS. A Phosphothreonine modification is found at Thr687. A phosphoserine; by autocatalysis mark is found at Ser737 and Ser745.

Belongs to the protein kinase superfamily. AGC Ser/Thr protein kinase family. S6 kinase subfamily. As to quaternary structure, forms a complex with either MAPK1/ERK2 or MAPK3/ERK1 in quiescent cells which transiently dissociates following mitogenic stimulation. Also associates with MAPK14/p38-alpha. Activated RPS6KA4 associates with and phosphorylates the NF-kappa-B p65 subunit RELA. It depends on Mg(2+) as a cofactor. In terms of processing, ser-343 and Thr-568 phosphorylation is required for kinase activity. Ser-343 and Ser-196 are autophosphorylated by the C-terminal kinase domain, and their phosphorylation is essential for the catalytic activity of the N-terminal kinase domain. Phosphorylated at Ser-343, Thr-568 and Thr-687 by MAPK1/ERK2, MAPK3/ERK1 and MAPK14/p38-alpha. Autophosphorylated at Ser-737 and Ser-745 by the N-terminal kinase domain.

The protein resides in the nucleus. It carries out the reaction L-seryl-[protein] + ATP = O-phospho-L-seryl-[protein] + ADP + H(+). The enzyme catalyses L-threonyl-[protein] + ATP = O-phospho-L-threonyl-[protein] + ADP + H(+). Its activity is regulated as follows. Activated by phosphorylation at Ser-343, Thr-568 and Thr-687 by MAPK1/ERK2, MAPK3/ERK1 and MAPK14/p38-alpha, and by further autophosphorylation of Ser-196, Ser-360 and Ser-365 by the activated C-terminal kinase domain. In terms of biological role, serine/threonine-protein kinase that is required for the mitogen or stress-induced phosphorylation of the transcription factors CREB1 and ATF1 and for the regulation of the transcription factor RELA, and that contributes to gene activation by histone phosphorylation and functions in the regulation of inflammatory genes. Phosphorylates CREB1 and ATF1 in response to mitogenic or stress stimuli such as UV-C irradiation, epidermal growth factor (EGF) and anisomycin. Plays an essential role in the control of RELA transcriptional activity in response to TNF. Phosphorylates 'Ser-10' of histone H3 in response to mitogenics, stress stimuli and EGF, which results in the transcriptional activation of several immediate early genes, including proto-oncogenes c-fos/FOS and c-jun/JUN. May also phosphorylate 'Ser-28' of histone H3. Mediates the mitogen- and stress-induced phosphorylation of high mobility group protein 1 (HMGN1/HMG14). In lipopolysaccharide-stimulated primary macrophages, acts downstream of the Toll-like receptor TLR4 to limit the production of pro-inflammatory cytokines. Functions probably by inducing transcription of the MAP kinase phosphatase DUSP1 and the anti-inflammatory cytokine interleukin 10 (IL10), via CREB1 and ATF1 transcription factors. The sequence is that of Ribosomal protein S6 kinase alpha-4 (Rps6ka4) from Mus musculus (Mouse).